Here is a 212-residue protein sequence, read N- to C-terminus: 2,3-bisphosphoglycerate-dependent phosphoglycerate mutase (212 aa).

Residues Arg-9–Asn-16, Thr-22–Gly-23, Arg-61, Glu-88–Tyr-91, Lys-99, Arg-115–Arg-116, and Gly-159–Asn-160 each bind substrate. His-10 functions as the Tele-phosphohistidine intermediate in the catalytic mechanism. Catalysis depends on Glu-88, which acts as the Proton donor/acceptor.

This sequence belongs to the phosphoglycerate mutase family. BPG-dependent PGAM subfamily. Homodimer.

The catalysed reaction is (2R)-2-phosphoglycerate = (2R)-3-phosphoglycerate. It participates in carbohydrate degradation; glycolysis; pyruvate from D-glyceraldehyde 3-phosphate: step 3/5. Catalyzes the interconversion of 2-phosphoglycerate and 3-phosphoglycerate. The polypeptide is 2,3-bisphosphoglycerate-dependent phosphoglycerate mutase (Methylobacterium radiotolerans (strain ATCC 27329 / DSM 1819 / JCM 2831 / NBRC 15690 / NCIMB 10815 / 0-1)).